A 196-amino-acid polypeptide reads, in one-letter code: uncharacterized protein (196 aa).

Belongs to the CDP-alcohol phosphatidyltransferase class-I family.

This is an uncharacterized protein from Aquifex aeolicus (strain VF5).